The sequence spans 815 residues: MGSDKRVSRTERSGRYGSIIDRDDRDERESRSRRRDSDYKRSSDDRRGDRYDDYRDYDSPERERERRNSDRSEDGYHSDGDYGEHDYRHDISDERESKTIMLRGLPITITESDIREMMESFEGPQPADVRLMKRKTGVSRGFAFVEFYHLQDATSWMEANQKKLVIQGKHIAMHYSNPRPKFEDWLCNKCCLNNFRKRLKCFRCGADKFDSEQEVPPGTTESVQSVDYYCDTIILRNIAPHTVVDSIMTALSPYASLAVNNIRLIKDKQTQQNRGFAFVQLSSAMDASQLLQILQSLHPPLKIDGKTIGVDFAKSARKDLVLSDGNRVSAFSVASTAIAAAQWSSTQSQSGEGGSVDYSYLQPGQDGYAQYAQYSQDYQQFYQQQAGGLESDASSASGTAVTTTSAAVVSQSPQLYNQTSNPPGSPTEEAQPSTSTSTQAPAASPTGVVPGTKYAVPDTSTYQYDESSGYYYDPTTGLYYDPNSQYYYNSLTQQYLYWDGEKETYVPAAESSSHQQSGLPPAKEGKEKKEKPKSKTAQQIAKDMERWAKSLNKQKENFKNSFQPVNSLREEERRESAAADAGFALFEKKGALAERQQLIPELVRNGDEENPLKRGLVAAYSGDSDNEEELVERLESEEEKLADWKKMACLLCRRQFPNKDALVRHQQLSDLHKQNMDIYRRSRLSEQELEALELREREMKYRDRAAERREKYGIPEPPEPKRKKQFDAGTVNYEQPTKDGIDHSNIGNKMLQAMGWREGSGLGRKCQGITAPIEAQVRLKGAGLGAKGSAYGLSGADSYKDAVRKAMFARFTEME.

The disordered stretch occupies residues 1–93; the sequence is MGSDKRVSRT…EHDYRHDISD (93 aa). A phosphoserine mark is found at serine 18, serine 59, serine 69, serine 72, and serine 78. An RRM 1 domain is found at 98-178; the sequence is KTIMLRGLPI…KHIAMHYSNP (81 aa). The segment at 181–210 adopts a RanBP2-type zinc-finger fold; it reads KFEDWLCNKCCLNNFRKRLKCFRCGADKFD. The RRM 2 domain maps to 231–315; that stretch reads DTIILRNIAP…KTIGVDFAKS (85 aa). The interval 321 to 809 is required for interaction with U2AF2; sequence VLSDGNRVSA…KDAVRKAMFA (489 aa). Residues 411–422 show a composition bias toward polar residues; that stretch reads QSPQLYNQTSNP. 2 disordered regions span residues 411–468 and 507–540; these read QSPQ…DESS and PAAESSSHQQSGLPPAKEGKEKKEKPKSKTAQQI. Low complexity predominate over residues 426-446; it reads PTEEAQPSTSTSTQAPAASPT. Serine 444 is subject to Phosphoserine. Residues 452-535 form a sufficient for interaction with ACIN1, PRPF8, SFRS3, SNRPB, SNRPN, SNRNP70 and SNRNP200 region; that stretch reads TKYAVPDTST…KEKKEKPKSK (84 aa). Phosphoserine is present on residues serine 621 and serine 624. Residues 647-677 form a C2H2-type; atypical zinc finger; the sequence is MACLLCRRQFPNKDALVRHQQLSDLHKQNMD. Residues 743-789 form the G-patch domain; the sequence is HSNIGNKMLQAMGWREGSGLGRKCQGITAPIEAQVRLKGAGLGAKGS.

This sequence belongs to the RBM5/RBM10 family. In terms of assembly, component of the spliceosome A complex (also known as the prespliceosome). Appears to dissociate from the spliceosome upon formation of the spliceosome B complex (also known as the precatalytic spliceosome), in which the heterotrimeric U4/U6.U5 snRNPs are bound. Interacts with U2AF2; this interaction is direct. Also interacts with ACIN1, PRPF8, SFRS3, SNRPB, SNRPN, SNRNP70 and SNRNP200; these interactions may be indirect. As to expression, isoform 5 is widely expressed in normal tissues and is expressed at increased levels in T-leukemic cell lines.

The protein localises to the nucleus. In terms of biological role, component of the spliceosome A complex. Binds to ssRNA containing the consensus sequence 5'-AGGUAA-3'. Regulates alternative splicing of a number of mRNAs. May modulate splice site pairing after recruitment of the U1 and U2 snRNPs to the 5' and 3' splice sites of the intron. May both positively and negatively regulate apoptosis by regulating the alternative splicing of several genes involved in this process, including FAS and CASP2/caspase-2. In the case of FAS, promotes exclusion of exon 6 thereby producing a soluble form of FAS that inhibits apoptosis. In the case of CASP2/caspase-2, promotes exclusion of exon 9 thereby producing a catalytically active form of CASP2/Caspase-2 that induces apoptosis. This is RNA-binding protein 5 (RBM5) from Homo sapiens (Human).